We begin with the raw amino-acid sequence, 316 residues long: tRNA methyltransferase 10 homolog B (316 aa).

Positions 73-97 form a coiled coil; the sequence is EKIVAAKKSKRKQEKERRKANRAEN. Residues 77 to 98 are disordered; the sequence is AAKKSKRKQEKERRKANRAENP. One can recognise an SAM-dependent MTase TRM10-type domain in the interval 113–310; it reads TKDKLLEAKH…KGVSSGKGYI (198 aa).

Belongs to the class IV-like SAM-binding methyltransferase superfamily. TRM10 family.

It carries out the reaction guanosine(9) in tRNA + S-adenosyl-L-methionine = N(1)-methylguanosine(9) in tRNA + S-adenosyl-L-homocysteine + H(+). Its function is as follows. S-adenosyl-L-methionine-dependent guanine N(1)-methyltransferase that catalyzes the formation of N(1)-methylguanine at position 9 (m1G9) in tRNAs. Probably not able to catalyze formation of N(1)-methyladenine at position 9 (m1A9) in tRNAs. This is tRNA methyltransferase 10 homolog B (TRMT10B) from Homo sapiens (Human).